Reading from the N-terminus, the 424-residue chain is Serine--tRNA ligase (424 aa).

231–233 (TAE) contributes to the L-serine binding site. 262–264 (RAE) lines the ATP pocket. Glu285 is an L-serine binding site. 349–352 (EISS) provides a ligand contact to ATP. Ser385 contacts L-serine.

The protein belongs to the class-II aminoacyl-tRNA synthetase family. Type-1 seryl-tRNA synthetase subfamily. As to quaternary structure, homodimer. The tRNA molecule binds across the dimer.

It localises to the cytoplasm. The enzyme catalyses tRNA(Ser) + L-serine + ATP = L-seryl-tRNA(Ser) + AMP + diphosphate + H(+). It carries out the reaction tRNA(Sec) + L-serine + ATP = L-seryl-tRNA(Sec) + AMP + diphosphate + H(+). It functions in the pathway aminoacyl-tRNA biosynthesis; selenocysteinyl-tRNA(Sec) biosynthesis; L-seryl-tRNA(Sec) from L-serine and tRNA(Sec): step 1/1. Its function is as follows. Catalyzes the attachment of serine to tRNA(Ser). Is also able to aminoacylate tRNA(Sec) with serine, to form the misacylated tRNA L-seryl-tRNA(Sec), which will be further converted into selenocysteinyl-tRNA(Sec). This chain is Serine--tRNA ligase, found in Geobacillus sp. (strain WCH70).